Here is a 349-residue protein sequence, read N- to C-terminus: Phosphate carrier protein, mitochondrial (349 aa).

3 Solcar repeats span residues lysine 47–glutamine 131, tyrosine 144–leucine 229, and glutamate 246–tryptophan 324. 6 helical membrane-spanning segments follow: residues tyrosine 48–valine 68, alanine 108–phenylalanine 128, phenylalanine 147–leucine 167, proline 207–valine 227, leucine 248–proline 268, and isoleucine 304–tryptophan 324.

It belongs to the mitochondrial carrier (TC 2.A.29) family.

Its subcellular location is the mitochondrion inner membrane. Functionally, transport of phosphate groups from the cytosol to the mitochondrial matrix. The polypeptide is Phosphate carrier protein, mitochondrial (Choristoneura fumiferana (Spruce budworm moth)).